Reading from the N-terminus, the 283-residue chain is MNGFFLVNKPEKMTSHDVVFQIKKKFHFDKVGHTGTLDPLASGLLIICVGKATKLAFLFDKLPKTYQGTFLFNKHYDTLDVTGKLLDTKNTPLTDCNIQKSFASFHQKKYLQIPPMFSAVKIKGKKMYRLARKNQVVDIPPREVFIHHFEKTSLFCRDQVDFLAHVSKGTYIRSLARDLALQLNTYGALLRLQRTAIGTHLLQNAKTIENLELNDLILDSTFFAAYDELILNDYLIKLVKNGTHLDQRQITTKKPFIVKDSNKNFVAYYDTLDENKYYPRYFF.

The active-site Nucleophile is D38.

It belongs to the pseudouridine synthase TruB family. Type 1 subfamily.

The enzyme catalyses uridine(55) in tRNA = pseudouridine(55) in tRNA. Responsible for synthesis of pseudouridine from uracil-55 in the psi GC loop of transfer RNAs. The polypeptide is tRNA pseudouridine synthase B (Onion yellows phytoplasma (strain OY-M)).